Reading from the N-terminus, the 220-residue chain is MKAGTLTLLIALCLPISVSATTLRLSSEVDLLVLDGKKVSSSLLRGADSIELENGPHQLVFRVEKTIQMPGHGERLYISPPLVASFNTQLISQVNFRLPSLLNEQETAHFDAAPRLELLDGDAMPIPVKLDILAITSVAKPIDYEGEVERYNKSAKRASLPQFATMMADDSTLLSGVSELDAIPPQSQVLTEQRLKYWFKQADPQTRNNFLQWAEKQPSS.

Residues 1–20 (MKAGTLTLLIALCLPISVSA) form the signal peptide.

Belongs to the UPF0319 family.

This is UPF0319 protein YccT from Escherichia fergusonii (strain ATCC 35469 / DSM 13698 / CCUG 18766 / IAM 14443 / JCM 21226 / LMG 7866 / NBRC 102419 / NCTC 12128 / CDC 0568-73).